The primary structure comprises 454 residues: Enolase (454 aa).

(2R)-2-phosphoglycerate is bound at residue Q167. The active-site Proton donor is E209. 3 residues coordinate Mg(2+): D250, E312, and D339. 4 residues coordinate (2R)-2-phosphoglycerate: K364, R393, S394, and K415. The active-site Proton acceptor is K364.

Belongs to the enolase family. The cofactor is Mg(2+).

The protein localises to the cytoplasm. It localises to the secreted. The protein resides in the cell surface. The enzyme catalyses (2R)-2-phosphoglycerate = phosphoenolpyruvate + H2O. The protein operates within carbohydrate degradation; glycolysis; pyruvate from D-glyceraldehyde 3-phosphate: step 4/5. Its function is as follows. Catalyzes the reversible conversion of 2-phosphoglycerate (2-PG) into phosphoenolpyruvate (PEP). It is essential for the degradation of carbohydrates via glycolysis. The protein is Enolase of Mycoplasmopsis agalactiae (strain NCTC 10123 / CIP 59.7 / PG2) (Mycoplasma agalactiae).